The following is a 154-amino-acid chain: Ribosomal RNA large subunit methyltransferase H (154 aa).

An S-adenosyl-L-methionine-binding site is contributed by Gly-102.

Belongs to the RNA methyltransferase RlmH family. As to quaternary structure, homodimer.

The protein localises to the cytoplasm. The catalysed reaction is pseudouridine(1915) in 23S rRNA + S-adenosyl-L-methionine = N(3)-methylpseudouridine(1915) in 23S rRNA + S-adenosyl-L-homocysteine + H(+). Specifically methylates the pseudouridine at position 1915 (m3Psi1915) in 23S rRNA. This chain is Ribosomal RNA large subunit methyltransferase H, found in Phenylobacterium zucineum (strain HLK1).